The chain runs to 89 residues: Putative regulatory protein CLL_A1210 (89 aa).

This sequence belongs to the RemA family.

This Clostridium botulinum (strain Eklund 17B / Type B) protein is Putative regulatory protein CLL_A1210.